Reading from the N-terminus, the 341-residue chain is Protein phosphatase methylesterase 1 (341 aa).

Residues 1-24 (MAFRKEELSQTLYENESEQSSETK) are disordered. The span at 9 to 20 (SQTLYENESEQS) shows a compositional bias: polar residues. Active-site residues include S153, D178, and H304.

Belongs to the AB hydrolase superfamily.

It catalyses the reaction [phosphatase 2A protein]-C-terminal L-leucine methyl ester + H2O = [phosphatase 2A protein]-C-terminal L-leucine + methanol + H(+). Demethylates proteins that have been reversibly carboxymethylated. Demethylates the phosphatase PP2A catalytic subunit. The protein is Protein phosphatase methylesterase 1 (ppe1) of Schizosaccharomyces pombe (strain 972 / ATCC 24843) (Fission yeast).